A 219-amino-acid polypeptide reads, in one-letter code: Germin-like protein subfamily 2 member 2 (219 aa).

Positions 1–22 (MMNSRISIIIALSCIMITSIRA) are cleaved as a signal peptide. An intrachain disulfide couples Cys32 to Cys47. N-linked (GlcNAc...) asparagine glycans are attached at residues Asn52 and Asn70. The Cupin type-1 domain maps to 59-209 (FFAGISKPAV…TFQVGSKMVD (151 aa)). His109, His111, Glu116, and His155 together coordinate Mn(2+).

This sequence belongs to the germin family. As to quaternary structure, oligomer (believed to be a pentamer but probably hexamer).

The protein resides in the secreted. The protein localises to the extracellular space. It is found in the apoplast. Its function is as follows. May play a role in plant defense. Probably has no oxalate oxidase activity even if the active site is conserved. The protein is Germin-like protein subfamily 2 member 2 of Arabidopsis thaliana (Mouse-ear cress).